Here is a 381-residue protein sequence, read N- to C-terminus: Cytochrome b (381 aa).

Helical transmembrane passes span 33-53 (FGSLLGICLIIQILTGLFLAM), 77-98 (WLLRNLHANGASMFFMCLFLHV), 113-133 (WNIGVILLLTVMATAFVGYVL), and 178-198 (FFAFHFILPFIITALAVVHLL). Heme b-binding residues include His83 and His97. 2 residues coordinate heme b: His182 and His196. His201 serves as a coordination point for a ubiquinone. 4 helical membrane passes run 226 to 246 (IKDALGLMLLLLMLLLLALFS), 288 to 308 (LGGVLALLASILILLIIPLLH), 320 to 340 (ISQTLFWILTANLITLTWIGG), and 347 to 367 (FIIIGQLAPMLYFLLILVLMP).

Belongs to the cytochrome b family. In terms of assembly, the cytochrome bc1 complex contains 11 subunits: 3 respiratory subunits (MT-CYB, CYC1 and UQCRFS1), 2 core proteins (UQCRC1 and UQCRC2) and 6 low-molecular weight proteins (UQCRH/QCR6, UQCRB/QCR7, UQCRQ/QCR8, UQCR10/QCR9, UQCR11/QCR10 and a cleavage product of UQCRFS1). This cytochrome bc1 complex then forms a dimer. Heme b is required as a cofactor.

The protein localises to the mitochondrion inner membrane. Component of the ubiquinol-cytochrome c reductase complex (complex III or cytochrome b-c1 complex) that is part of the mitochondrial respiratory chain. The b-c1 complex mediates electron transfer from ubiquinol to cytochrome c. Contributes to the generation of a proton gradient across the mitochondrial membrane that is then used for ATP synthesis. This chain is Cytochrome b (MT-CYB), found in Pseudantechinus bilarni (Sandstone dibbler).